The chain runs to 197 residues: Molybdenum cofactor guanylyltransferase (197 aa).

Residues 10-12 (LAG), K23, N51, D69, and D99 contribute to the GTP site. D99 is a Mg(2+) binding site.

Belongs to the MobA family. In terms of assembly, monomer. Mg(2+) serves as cofactor.

The protein localises to the cytoplasm. The enzyme catalyses Mo-molybdopterin + GTP + H(+) = Mo-molybdopterin guanine dinucleotide + diphosphate. Functionally, transfers a GMP moiety from GTP to Mo-molybdopterin (Mo-MPT) cofactor (Moco or molybdenum cofactor) to form Mo-molybdopterin guanine dinucleotide (Mo-MGD) cofactor. The protein is Molybdenum cofactor guanylyltransferase of Shewanella sp. (strain MR-4).